An 81-amino-acid polypeptide reads, in one-letter code: UPF0181 protein Spro_2806 (81 aa).

The disordered stretch occupies residues 43-81 (EKHQGDQVSVMFDDEDDDEEYQERPDDQADDDSEEDENY). 2 stretches are compositionally biased toward acidic residues: residues 54–63 (FDDEDDDEEY) and 70–81 (QADDDSEEDENY).

Belongs to the UPF0181 family.

The protein is UPF0181 protein Spro_2806 of Serratia proteamaculans (strain 568).